A 188-amino-acid chain; its full sequence is Inner membrane-spanning protein YciB (188 aa).

5 helical membrane-spanning segments follow: residues 22–42, 50–70, 72–92, 121–141, and 149–169; these read IYIASGALIAATALSLAVTWM, MTLVTFAMVVVFGSLTLVFHN, LFIKWKVTIIYALFAVALLVS, FAWAMFFLVCGLVNIYIAFWL, and FKVFGLTGVTLLFTLICGVYI.

The protein belongs to the YciB family.

It is found in the cell inner membrane. Functionally, plays a role in cell envelope biogenesis, maintenance of cell envelope integrity and membrane homeostasis. In Pectobacterium carotovorum subsp. carotovorum (strain PC1), this protein is Inner membrane-spanning protein YciB.